Here is a 340-residue protein sequence, read N- to C-terminus: Ephrin-B3 (340 aa).

Residues 1–27 form the signal peptide; the sequence is MGPPHSGPGGVRVGALLLLGVLGLVSG. One can recognise an Ephrin RBD domain in the interval 28–167; it reads LSLEPVYWNS…TRGMKVLLRV (140 aa). Residues 28-226 lie on the Extracellular side of the membrane; it reads LSLEPVYWNS…EGPLPPPSMP (199 aa). 2 disulfides stabilise this stretch: C62–C104 and C92–C156. A disordered region spans residues 168-225; it reads GQSPRGGAVPRKPVSEMPMERDRGAAHSLEPGKENLPGDPTSNATSRGAEGPLPPPSM. Residues 185–200 show a composition bias toward basic and acidic residues; sequence PMERDRGAAHSLEPGK. N-linked (GlcNAc...) asparagine glycosylation occurs at N210. Residues 227-247 form a helical membrane-spanning segment; that stretch reads AVAGAAGGLALLLLGVAGAGG. Topologically, residues 248–340 are cytoplasmic; that stretch reads AMCWRRRRAK…QSPPNIYYKV (93 aa). The interval 254–298 is disordered; it reads RRAKPSESRHPGPGSFGRGGSLGLGGGGGMGPREAEPGELGIALR. The segment covering 267–284 has biased composition (gly residues); sequence GSFGRGGSLGLGGGGGMG. The residue at position 271 (R271) is an Omega-N-methylarginine. Residue S274 is modified to Phosphoserine. The PDZ-binding motif lies at 338–340; sequence YKV.

Belongs to the ephrin family. Interacts with GRIP1 and GRIP2. As to quaternary structure, (Microbial infection) Interacts with nipah virus and hendra virus glycoprotein. In terms of tissue distribution, highly expressed in brain; expressed in embryonic floor plate, roof plate and hindbrain segments.

It localises to the membrane. Cell surface transmembrane ligand for Eph receptors, a family of receptor tyrosine kinases which are crucial for migration, repulsion and adhesion during neuronal, vascular and epithelial development. Binds promiscuously Eph receptors residing on adjacent cells, leading to contact-dependent bidirectional signaling into neighboring cells. The signaling pathway downstream of the receptor is referred to as forward signaling while the signaling pathway downstream of the ephrin ligand is referred to as reverse signaling. May play a pivotal role in forebrain function. Binds to, and induce the collapse of, commissural axons/growth cones in vitro. May play a role in constraining the orientation of longitudinally projecting axons. In terms of biological role, (Microbial infection) Acts as a receptor for nipah virus and hendra virus. This is Ephrin-B3 (EFNB3) from Homo sapiens (Human).